Here is a 188-residue protein sequence, read N- to C-terminus: Elongation factor P-like protein (188 aa).

This sequence belongs to the elongation factor P family.

The polypeptide is Elongation factor P-like protein (Vibrio campbellii (strain ATCC BAA-1116)).